We begin with the raw amino-acid sequence, 334 residues long: RNA 3'-terminal phosphate cyclase (334 aa).

279–282 lines the ATP pocket; it reads HMGD. His-303 functions as the Tele-AMP-histidine intermediate in the catalytic mechanism.

The protein belongs to the RNA 3'-terminal cyclase family. Type 1 subfamily.

The protein resides in the cytoplasm. The enzyme catalyses a 3'-end 3'-phospho-ribonucleotide-RNA + ATP = a 3'-end 2',3'-cyclophospho-ribonucleotide-RNA + AMP + diphosphate. Functionally, catalyzes the conversion of 3'-phosphate to a 2',3'-cyclic phosphodiester at the end of RNA. The mechanism of action of the enzyme occurs in 3 steps: (A) adenylation of the enzyme by ATP; (B) transfer of adenylate to an RNA-N3'P to produce RNA-N3'PP5'A; (C) and attack of the adjacent 2'-hydroxyl on the 3'-phosphorus in the diester linkage to produce the cyclic end product. The biological role of this enzyme is unknown but it is likely to function in some aspects of cellular RNA processing. In Metallosphaera sedula (strain ATCC 51363 / DSM 5348 / JCM 9185 / NBRC 15509 / TH2), this protein is RNA 3'-terminal phosphate cyclase.